Here is a 341-residue protein sequence, read N- to C-terminus: Phosphoribosylformylglycinamidine cyclo-ligase (341 aa).

It belongs to the AIR synthase family.

The protein resides in the cytoplasm. The enzyme catalyses 2-formamido-N(1)-(5-O-phospho-beta-D-ribosyl)acetamidine + ATP = 5-amino-1-(5-phospho-beta-D-ribosyl)imidazole + ADP + phosphate + H(+). It functions in the pathway purine metabolism; IMP biosynthesis via de novo pathway; 5-amino-1-(5-phospho-D-ribosyl)imidazole from N(2)-formyl-N(1)-(5-phospho-D-ribosyl)glycinamide: step 2/2. The chain is Phosphoribosylformylglycinamidine cyclo-ligase from Synechococcus elongatus (strain ATCC 33912 / PCC 7942 / FACHB-805) (Anacystis nidulans R2).